The following is a 278-amino-acid chain: Phosphoenolpyruvate carboxylase kinase 2 (278 aa).

One can recognise a Protein kinase domain in the interval 11-269 (YQLCDEIGRG…AEDALRHSWM (259 aa)). ATP is bound by residues 17-25 (IGRGRFGTI) and Lys-40. Asp-137 (proton acceptor) is an active-site residue.

It belongs to the protein kinase superfamily. Ser/Thr protein kinase family. In terms of tissue distribution, expressed in flowers and roots, and at lower levels in cauline leaves. Barely detectable in rosette leaves and stems.

It carries out the reaction L-seryl-[protein] + ATP = O-phospho-L-seryl-[protein] + ADP + H(+). The catalysed reaction is L-threonyl-[protein] + ATP = O-phospho-L-threonyl-[protein] + ADP + H(+). Its function is as follows. Calcium-independent kinase involved in light-dependent phosphoenolpyruvate carboxylase phosphorylation. This chain is Phosphoenolpyruvate carboxylase kinase 2 (PPCK2), found in Arabidopsis thaliana (Mouse-ear cress).